A 388-amino-acid polypeptide reads, in one-letter code: MVEADRPGKLFIGGLNTETNEKALEAVFGKYGRIVEILLMKDRETNKSRGFAFVTFESPADAKDVARDMNGKSLDGKAIKVEQATKPSFESGRRGPPPPPRSRGPPRGLRGGSGGTRGPPSRGGYMDDGGYSMNFNMSSSRGPLPVKRGPPPRSGGPPPKRSTPSGPVRSSSGMGGRMPVSRGRDSYGGPPRREPLPSRRDVYLSPRDDGYSTKDSYSSRDYLSSRDTRDYAPPPRDYTYRDYSHSSSRDDYPSRGYGDRDGYGRDREYSDHPSGGSYRDSYESYGNSCSAPPTRGPPPSYGGSSRYDDYSSSRDGYGGSRDSYSSSRSDLYSSDRDRVGRQERGLPPSMERGYPPPRDFYSSSSRGAPRGGGRGGSRSDRGGGQKQI.

The region spanning 8–86 is the RRM domain; the sequence is GKLFIGGLNT…KAIKVEQATK (79 aa). The span at 61-80 shows a compositional bias: basic and acidic residues; it reads DAKDVARDMNGKSLDGKAIK. The disordered stretch occupies residues 61-388; that stretch reads DAKDVARDMN…SDRGGGQKQI (328 aa). Lys80 is covalently cross-linked (Glycyl lysine isopeptide (Lys-Gly) (interchain with G-Cter in SUMO2)). Phosphoserine is present on Ser88. Residues 148 to 161 show a composition bias toward pro residues; it reads RGPPPRSGGPPPKR. 2 stretches are compositionally biased toward basic and acidic residues: residues 191 to 212 and 238 to 271; these read PRREPLPSRRDVYLSPRDDGYS and YTYRDYSHSSSRDDYPSRGYGDRDGYGRDREYSD. The span at 320-332 shows a compositional bias: low complexity; sequence SRDSYSSSRSDLY. Basic and acidic residues-rich tracts occupy residues 333–344 and 377–388; these read SSDRDRVGRQER and SRSDRGGGQKQI.

It is found in the nucleus. RNA-binding protein which may be involved in pre-mRNA splicing. The sequence is that of RNA binding motif protein, X-linked-like-1 (Rbmxl1) from Rattus norvegicus (Rat).